A 519-amino-acid polypeptide reads, in one-letter code: Cell division cycle protein 20 homolog B (519 aa).

A disordered region spans residues 77–106 (WQLSPARDPESSSSVEEGPPSHTPESLASG). A compositionally biased stretch (low complexity) spans 87–96 (SSSSVEEGPP). WD repeat units lie at residues 229 to 266 (RNDY…WIEN), 271 to 310 (VCCH…QLRN), 353 to 392 (YHKE…GVQG), 399 to 441 (PQST…NIQT), 443 to 484 (STQS…RSGG), and 487 to 519 (GHRD…WKCC).

It belongs to the WD repeat CDC20/Fizzy family. Expressed in multiciliated cells (MCCs).

Its subcellular location is the cytoplasm. Its function is as follows. Protein regulator of centriole-deuterosome disengagement and subsequently participates in the ciliogenesis in multiciliated cells (MCCs). This Mus musculus (Mouse) protein is Cell division cycle protein 20 homolog B.